Reading from the N-terminus, the 508-residue chain is Photosystem II CP47 reaction center protein (508 aa).

Helical transmembrane passes span 21–36 (SVHIMHTALVAGWAGS), 101–115 (IVFSGLCFLAAIWHW), 140–156 (GIHLFLSGVACFGFGAF), 203–218 (IAAGTLGILAGLFHLS), 237–252 (VLSSSIAAVFFAAFVV), and 457–472 (SFALLFFFGHIWHGAR).

The protein belongs to the PsbB/PsbC family. PsbB subfamily. As to quaternary structure, PSII is composed of 1 copy each of membrane proteins PsbA, PsbB, PsbC, PsbD, PsbE, PsbF, PsbH, PsbI, PsbJ, PsbK, PsbL, PsbM, PsbT, PsbX, PsbY, PsbZ, Psb30/Ycf12, at least 3 peripheral proteins of the oxygen-evolving complex and a large number of cofactors. It forms dimeric complexes. Binds multiple chlorophylls. PSII binds additional chlorophylls, carotenoids and specific lipids. serves as cofactor.

The protein resides in the plastid. The protein localises to the chloroplast thylakoid membrane. Its function is as follows. One of the components of the core complex of photosystem II (PSII). It binds chlorophyll and helps catalyze the primary light-induced photochemical processes of PSII. PSII is a light-driven water:plastoquinone oxidoreductase, using light energy to abstract electrons from H(2)O, generating O(2) and a proton gradient subsequently used for ATP formation. This Aethionema cordifolium (Lebanon stonecress) protein is Photosystem II CP47 reaction center protein.